Reading from the N-terminus, the 217-residue chain is Probable transaldolase (217 aa).

The active-site Schiff-base intermediate with substrate is Lys-83.

It belongs to the transaldolase family. Type 3B subfamily.

It localises to the cytoplasm. It catalyses the reaction D-sedoheptulose 7-phosphate + D-glyceraldehyde 3-phosphate = D-erythrose 4-phosphate + beta-D-fructose 6-phosphate. The protein operates within carbohydrate degradation; pentose phosphate pathway; D-glyceraldehyde 3-phosphate and beta-D-fructose 6-phosphate from D-ribose 5-phosphate and D-xylulose 5-phosphate (non-oxidative stage): step 2/3. Transaldolase is important for the balance of metabolites in the pentose-phosphate pathway. The sequence is that of Probable transaldolase (tal) from Methanocaldococcus jannaschii (strain ATCC 43067 / DSM 2661 / JAL-1 / JCM 10045 / NBRC 100440) (Methanococcus jannaschii).